The chain runs to 494 residues: Alpha-amylase-related protein (494 aa).

Residues 1–20 (MIKFALALTLCLAGASLSLA) form the signal peptide. Q21 is subject to Pyrrolidone carboxylic acid. A disulfide bridge connects residues C48 and C104. Ca(2+) contacts are provided by N118, Q169, and D178. A disulfide bridge links C157 with C171. R206 contacts chloride. Residue D208 is the Nucleophile of the active site. Residue H212 participates in Ca(2+) binding. E245 functions as the Proton donor in the catalytic mechanism. N308 and R343 together coordinate chloride. Disulfide bonds link C376-C382, C418-C441, and C448-C460.

This sequence belongs to the glycosyl hydrolase 13 family. As to quaternary structure, monomer. The cofactor is Ca(2+). Chloride serves as cofactor.

It is found in the secreted. It carries out the reaction Endohydrolysis of (1-&gt;4)-alpha-D-glucosidic linkages in polysaccharides containing three or more (1-&gt;4)-alpha-linked D-glucose units.. In Drosophila lini (Fruit fly), this protein is Alpha-amylase-related protein (Amyrel).